Here is a 3341-residue protein sequence, read N- to C-terminus: Genome polyprotein (3341 aa).

2 stretches are compositionally biased toward basic and acidic residues: residues Met-1 to Gly-14 and Arg-24 to Gly-35. The disordered stretch occupies residues Met-1–Lys-57. Over Met-1–Pro-120 the chain is Cytoplasmic. A compositionally biased stretch (polar residues) spans Ser-37–Gln-50. The hydrophobic; homodimerization of capsid protein C stretch occupies residues Ala-55–Ile-97. Positions Thr-117 to Cys-136 are cleaved as a propeptide — ER anchor for the capsid protein C, removed in mature form by serine protease NS3. The chain crosses the membrane as a helical span at residues Met-121–Met-141. Residues Gln-142–Thr-245 are Extracellular-facing. 2 N-linked (GlcNAc...) asparagine; by host glycosylation sites follow: Asn-157 and Asn-243. The chain crosses the membrane as a helical span at residues Ile-246–Thr-262. Residue Trp-263 is a topological domain, cytoplasmic. Residues Val-264 to Gly-278 form a helical membrane-spanning segment. The Extracellular portion of the chain corresponds to Glu-279 to Phe-665. A glycan (N-linked (GlcNAc...) asparagine; by host) is linked at Asn-339. The segment at Asn-371 to Gly-384 is involved in fusion. N-linked (GlcNAc...) asparagine; by host glycosylation is found at Asn-399, Asn-411, Asn-575, and Asn-611. The helical transmembrane segment at Ser-666–Ile-686 threads the bilayer. At Asp-687 to Arg-689 the chain is on the cytoplasmic side. A helical transmembrane segment spans residues Ile-690 to Ala-705. Over Asp-706–Arg-1138 the chain is Extracellular. N-linked (GlcNAc...) asparagine; by host glycans are attached at residues Asn-794, Asn-896, Asn-993, and Asn-1027. Residues Leu-1139 to Gly-1159 traverse the membrane as a helical segment. The Cytoplasmic segment spans residues Leu-1160–Ser-1178. The helical transmembrane segment at Met-1179 to Ile-1199 threads the bilayer. At Arg-1200–Ala-1204 the chain is on the lumenal side. The chain crosses the membrane as a helical span at residues Met-1205 to Val-1225. At Asp-1226–Tyr-1231 the chain is on the cytoplasmic side. Residues Leu-1232–Leu-1252 traverse the membrane as a helical segment. The Lumenal segment spans residues Gln-1253–Cys-1261. A helical membrane pass occupies residues Phe-1262 to Phe-1282. Over Ser-1283–Asp-1303 the chain is Cytoplasmic. A helical membrane pass occupies residues Ser-1304–Ala-1324. Residues Glu-1325–Lys-1326 are Lumenal-facing. A helical transmembrane segment spans residues Ala-1327–Met-1347. The Cytoplasmic portion of the chain corresponds to Glu-1348–Glu-1403. Positions Leu-1404–Leu-1424 form an intramembrane region, helical. At Tyr-1425–Ala-2089 the chain is on the cytoplasmic side. The Peptidase S7 domain occupies Ser-1452–Asn-1630. Residues His-1506, Asp-1530, and Ser-1589 each act as charge relay system; for serine protease NS3 activity in the active site. In terms of domain architecture, Helicase ATP-binding spans Glu-1627–Ile-1780. ATP is bound at residue Trp-1640–Thr-1647. A DECH box motif is present at residues Asp-1729–His-1732. A Helicase C-terminal domain is found at Asn-1793–Ser-1947. Residues Phe-2090 to Leu-2110 traverse the membrane as a helical segment. Residues Phe-2111–Met-2145 are Lumenal-facing. Residues Gly-2146–Leu-2166 traverse the membrane as a helical segment. The Cytoplasmic portion of the chain corresponds to Tyr-2167–Ser-2178. The chain crosses the membrane as a helical span at residues Asp-2179 to Met-2199. At Arg-2200–Met-2242 the chain is on the lumenal side. Residues Leu-2243–Phe-2263 form a helical membrane-spanning segment. Topologically, residues Gln-2264–Ala-2302 are cytoplasmic. An intramembrane region (helical) is located at residues Ile-2303–Met-2323. Over Ala-2324–Ser-2366 the chain is Cytoplasmic. The chain crosses the membrane as a helical span at residues Ile-2367 to Gly-2387. The Lumenal segment spans residues Asp-2388–Asp-2412. The helical transmembrane segment at Val-2413–Tyr-2433 threads the bilayer. Residues Arg-2434 to Ile-3341 lie on the Cytoplasmic side of the membrane. Positions Ala-2454–Ala-2706 constitute an mRNA cap 0-1 NS5-type MT domain. Position 2497 (Ser-2497) interacts with S-adenosyl-L-methionine. Catalysis depends on Lys-2509, which acts as the For 2'-O-MTase activity. S-adenosyl-L-methionine-binding residues include Gly-2527, Trp-2528, Thr-2545, Ile-2546, Asp-2572, and Val-2573. Asp-2587 acts as the For 2'-O-MTase activity in catalysis. Ile-2588 contacts S-adenosyl-L-methionine. Catalysis depends on for 2'-O-MTase activity residues Lys-2624 and Glu-2660. An S-adenosyl-L-methionine-binding site is contributed by Tyr-2662. Zn(2+) is bound by residues Glu-2881, His-2885, Cys-2890, and Cys-2893. In terms of domain architecture, RdRp catalytic spans Lys-2970–Ala-3117. Zn(2+)-binding residues include His-3152, Cys-3168, and Cys-3287.

This sequence in the N-terminal section; belongs to the class I-like SAM-binding methyltransferase superfamily. mRNA cap 0-1 NS5-type methyltransferase family. As to quaternary structure, homodimer. In terms of assembly, forms heterodimers with envelope protein E in the endoplasmic reticulum and Golgi. Homodimer; in the endoplasmic reticulum and Golgi. As to quaternary structure, forms homodimers as well as homohexamers. NS1 may interact with NS4A. In terms of assembly, forms a heterodimer with serine protease NS3. May form homooligomers. Forms a heterodimer with NS2B. Interacts with NS4B. Interacts with unphosphorylated RNA-directed RNA polymerase NS5; this interaction stimulates RNA-directed RNA polymerase NS5 guanylyltransferase activity. As to quaternary structure, interacts with serine protease NS3. In terms of assembly, interacts with host STAT2; this interaction inhibits the phosphorylation of the latter, and, when all viral proteins are present (polyprotein), targets STAT2 for degradation. Genome polyprotein: Specific enzymatic cleavages in vivo yield mature proteins. Cleavages in the lumen of endoplasmic reticulum are performed by host signal peptidase, whereas cleavages in the cytoplasmic side are performed by serine protease NS3. Signal cleavage at the 2K-4B site requires a prior NS3 protease-mediated cleavage at the 4A-2K site. Post-translationally, cleaved in post-Golgi vesicles by a host furin, releasing the mature small envelope protein M, and peptide pr. This cleavage is incomplete as up to 30% of viral particles still carry uncleaved prM. In terms of processing, N-glycosylated. N-glycosylated. The excreted form is glycosylated and this is required for efficient secretion of the protein from infected cells. Post-translationally, phosphorylated on serines residues. This phosphorylation may trigger NS5 nuclear localization.

It is found in the virion. The protein resides in the host nucleus. Its subcellular location is the secreted. It localises to the virion membrane. The protein localises to the host endoplasmic reticulum membrane. It catalyses the reaction Selective hydrolysis of -Xaa-Xaa-|-Yaa- bonds in which each of the Xaa can be either Arg or Lys and Yaa can be either Ser or Ala.. It carries out the reaction RNA(n) + a ribonucleoside 5'-triphosphate = RNA(n+1) + diphosphate. The catalysed reaction is a ribonucleoside 5'-triphosphate + H2O = a ribonucleoside 5'-diphosphate + phosphate + H(+). The enzyme catalyses ATP + H2O = ADP + phosphate + H(+). It catalyses the reaction a 5'-end (5'-triphosphoguanosine)-ribonucleoside in mRNA + S-adenosyl-L-methionine = a 5'-end (N(7)-methyl 5'-triphosphoguanosine)-ribonucleoside in mRNA + S-adenosyl-L-homocysteine. It carries out the reaction a 5'-end (N(7)-methyl 5'-triphosphoguanosine)-ribonucleoside in mRNA + S-adenosyl-L-methionine = a 5'-end (N(7)-methyl 5'-triphosphoguanosine)-(2'-O-methyl-ribonucleoside) in mRNA + S-adenosyl-L-homocysteine + H(+). Plays a role in virus budding by binding to the cell membrane and gathering the viral RNA into a nucleocapsid that forms the core of a mature virus particle. During virus entry, may induce genome penetration into the host cytoplasm after hemifusion induced by the surface proteins. Can migrate to the cell nucleus where it modulates host functions. Functionally, prevents premature fusion activity of envelope proteins in trans-Golgi by binding to envelope protein E at pH6.0. After virion release in extracellular space, gets dissociated from E dimers. In terms of biological role, acts as a chaperone for envelope protein E during intracellular virion assembly by masking and inactivating envelope protein E fusion peptide. prM is the only viral peptide matured by host furin in the trans-Golgi network probably to avoid catastrophic activation of the viral fusion activity in acidic Golgi compartment prior to virion release. prM-E cleavage is inefficient, and many virions are only partially matured. These uncleaved prM would play a role in immune evasion. Its function is as follows. May play a role in virus budding. Exerts cytotoxic effects by activating a mitochondrial apoptotic pathway through M ectodomain. May display a viroporin activity. Binds to host cell surface receptor and mediates fusion between viral and cellular membranes. Envelope protein is synthesized in the endoplasmic reticulum in the form of heterodimer with protein prM. They play a role in virion budding in the ER, and the newly formed immature particle is covered with 60 spikes composed of heterodimer between precursor prM and envelope protein E. The virion is transported to the Golgi apparatus where the low pH causes dissociation of PrM-E heterodimers and formation of E homodimers. prM-E cleavage is inefficient, and many virions are only partially matured. These uncleaved prM would play a role in immune evasion. Functionally, involved in immune evasion, pathogenesis and viral replication. Once cleaved off the polyprotein, is targeted to three destinations: the viral replication cycle, the plasma membrane and the extracellular compartment. May play a role in viral genome replication. Assist membrane bending and envelopment of genomic RNA at the endoplasmic reticulum. Excreted as a hexameric lipoparticle that plays a role against host immune response. In terms of biological role, component of the viral RNA replication complex that functions in virion assembly and antagonizes the host immune response. Its function is as follows. Required cofactor for the serine protease function of NS3. May have membrane-destabilizing activity and form viroporins. Displays three enzymatic activities: serine protease, NTPase and RNA helicase. NS3 serine protease, in association with NS2B, performs its autocleavage and cleaves the polyprotein at dibasic sites in the cytoplasm: C-prM, NS2A-NS2B, NS2B-NS3, NS3-NS4A, NS4A-2K and NS4B-NS5. NS3 RNA helicase binds RNA and unwinds dsRNA in the 3' to 5' direction. Functionally, regulates the ATPase activity of the NS3 helicase activity. NS4A allows NS3 helicase to conserve energy during unwinding. In terms of biological role, functions as a signal peptide for NS4B and is required for the interferon antagonism activity of the latter. Its function is as follows. Inhibits interferon (IFN)-induced host STAT1 phosphorylation and nuclear translocation, thereby preventing the establishment of a cellular antiviral state by blocking the IFN-alpha/beta pathway. Replicates the viral (+) and (-) RNA genome, and performs the capping of genomes in the cytoplasm. NS5 methylates viral RNA cap at guanine N-7 and ribose 2'-O positions. Besides its role in RNA genome replication, also prevents the establishment of cellular antiviral state by blocking the interferon-alpha/beta (IFN-alpha/beta) signaling pathway. Inhibits host TYK2 and STAT2 phosphorylation, thereby preventing activation of JAK-STAT signaling pathway. This chain is Genome polyprotein, found in Aedes (CFA flavivirus).